The following is a 698-amino-acid chain: Serotransferrin (698 aa).

An N-terminal signal peptide occupies residues 1 to 19 (MRLAVGALLVCAVLGLCLA). Transferrin-like domains follow at residues 25–347 (VRWC…NLRE) and 361–683 (VKWC…NLRK). 2 disulfides stabilise this stretch: C28-C67 and C38-C58. The residue at position 42 (R42) is a Dimethylated arginine. S51 carries an O-linked (GalNAc...) serine glycan. Fe(3+) contacts are provided by D82 and Y114. Disulfide bonds link C137–C213, C156–C350, C177–C193, C180–C196, C190–C198, C246–C260, C358–C615, C364–C396, C374–C387, C421–C693, C437–C656, C469–C542, C493–C684, C503–C517, C514–C525, C582–C596, and C634–C639. Positions 139, 143, 145, and 146 each coordinate hydrogencarbonate. Position 207 (Y207) interacts with Fe(3+). A Fe(3+)-binding site is contributed by H268. At S389 the chain carries Phosphoserine. The Fe(3+) site is built by D411 and Y445. Residues T471, R475, A477, and G478 each coordinate hydrogencarbonate. A Fe(3+)-binding site is contributed by Y536. H604 serves as a coordination point for Fe(3+). N-linked (GlcNAc...) asparagine glycosylation occurs at N630. The residue at position 685 (S685) is a Phosphoserine.

Belongs to the transferrin family. As to quaternary structure, monomer. Part of a complex composed of SLC40A1/ferroportin, TF/transferrin and HEPH/hephaestin that transfers iron from cells to transferrin. As to expression, expressed by the liver and secreted in plasma.

The protein localises to the secreted. Functionally, transferrins are iron binding transport proteins which can bind two Fe(3+) ions in association with the binding of an anion, usually bicarbonate. It is responsible for the transport of iron from sites of absorption and heme degradation to those of storage and utilization. Serum transferrin may also have a further role in stimulating cell proliferation. In Pan troglodytes (Chimpanzee), this protein is Serotransferrin (TF).